Here is a 1470-residue protein sequence, read N- to C-terminus: RNA-directed RNA polymerase VP1 (1470 aa).

Residues 28 to 55 are disordered; sequence AKQDQKENETTSNNKDTSSSVPKPSNFR. Residues 37–50 are compositionally biased toward polar residues; the sequence is TTSNNKDTSSSVPK.

The catalysed reaction is RNA(n) + a ribonucleoside 5'-triphosphate = RNA(n+1) + diphosphate. In terms of biological role, RNA-directed RNA polymerase that is involved in transcription and genome replication. Following infection, it catalyzes the synthesis of fully conservative plus strands. After core assembly, which consists in recruitment of one capped plus-strand for each genomic segments and polymerase complexes, the polymerase switches mode and catalyzes the synthesis of complementary minus-strands. This Saccharum officinarum (Sugarcane) protein is RNA-directed RNA polymerase VP1 (S1).